The primary structure comprises 89 residues: Putative membrane protein insertion efficiency factor (89 aa).

The segment at 68–89 (VPPPNSDARNAPHEAEASSHRL) is disordered. Basic and acidic residues predominate over residues 77 to 89 (NAPHEAEASSHRL).

Belongs to the UPF0161 family.

Its subcellular location is the cell inner membrane. Its function is as follows. Could be involved in insertion of integral membrane proteins into the membrane. This chain is Putative membrane protein insertion efficiency factor, found in Burkholderia mallei (strain SAVP1).